The following is a 175-amino-acid chain: uncharacterized protein (175 aa).

This is an uncharacterized protein from Connochaetes taurinus (Blue wildebeest).